We begin with the raw amino-acid sequence, 181 residues long: Neuroblastoma suppressor of tumorigenicity 1 (181 aa).

The N-terminal stretch at 1–16 is a signal peptide; it reads MMLRVLVGAVLPAMLL. Intrachain disulfides connect Cys35/Cys85, Cys49/Cys99, Cys59/Cys118, Cys63/Cys120, and Cys82/Cys123. One can recognise a CTCK domain in the interval 35–124; the sequence is CEAKNITQIV…ILHCSCQACG (90 aa). Positions 132 to 181 are disordered; that stretch reads LSVYVQGEDGPGSQPGTHPHPHPHPHPGGQTPEPEDPPGAPHTEEEGAED.

This sequence belongs to the DAN family. As to quaternary structure, homodimer. As to expression, most abundant in normal lung and meningioma.

The protein localises to the secreted. Its function is as follows. Possible candidate as a tumor suppressor gene of neuroblastoma. May play an important role in preventing cells from entering the final stage (G1/S) of the transformation process. The protein is Neuroblastoma suppressor of tumorigenicity 1 (NBL1) of Homo sapiens (Human).